Here is a 361-residue protein sequence, read N- to C-terminus: Phosphoserine aminotransferase (361 aa).

Arg42 is a binding site for L-glutamate. Residues 76 to 77, Trp102, Thr153, Asp173, and Gln196 contribute to the pyridoxal 5'-phosphate site; that span reads AR. At Lys197 the chain carries N6-(pyridoxal phosphate)lysine. Pyridoxal 5'-phosphate is bound at residue 238–239; the sequence is NT.

This sequence belongs to the class-V pyridoxal-phosphate-dependent aminotransferase family. SerC subfamily. As to quaternary structure, homodimer. The cofactor is pyridoxal 5'-phosphate.

It localises to the cytoplasm. It carries out the reaction O-phospho-L-serine + 2-oxoglutarate = 3-phosphooxypyruvate + L-glutamate. The catalysed reaction is 4-(phosphooxy)-L-threonine + 2-oxoglutarate = (R)-3-hydroxy-2-oxo-4-phosphooxybutanoate + L-glutamate. It participates in amino-acid biosynthesis; L-serine biosynthesis; L-serine from 3-phospho-D-glycerate: step 2/3. The protein operates within cofactor biosynthesis; pyridoxine 5'-phosphate biosynthesis; pyridoxine 5'-phosphate from D-erythrose 4-phosphate: step 3/5. In terms of biological role, catalyzes the reversible conversion of 3-phosphohydroxypyruvate to phosphoserine and of 3-hydroxy-2-oxo-4-phosphonooxybutanoate to phosphohydroxythreonine. In Buchnera aphidicola subsp. Acyrthosiphon pisum (strain Tuc7), this protein is Phosphoserine aminotransferase.